Consider the following 270-residue polypeptide: 2-dehydro-3-deoxyphosphooctonate aldolase (270 aa).

It belongs to the KdsA family.

It is found in the cytoplasm. It carries out the reaction D-arabinose 5-phosphate + phosphoenolpyruvate + H2O = 3-deoxy-alpha-D-manno-2-octulosonate-8-phosphate + phosphate. The protein operates within carbohydrate biosynthesis; 3-deoxy-D-manno-octulosonate biosynthesis; 3-deoxy-D-manno-octulosonate from D-ribulose 5-phosphate: step 2/3. Its pathway is bacterial outer membrane biogenesis; lipopolysaccharide biosynthesis. The protein is 2-dehydro-3-deoxyphosphooctonate aldolase of Helicobacter hepaticus (strain ATCC 51449 / 3B1).